Consider the following 751-residue polypeptide: MSKGECPMRTANVAGGGTKIKDWWPNELPVSVLRQHDPRQNPLTSDFNYAEEFKKLDYNALKKDLTALMTDSQDWWPADFGHYGGLFVRMAWHSAGTYRVTDGRGGGGDGQQRFAPLNAWPDNVSLDKARRLLWPIKQKYGNKISWADLMLLTGNVALESMGCETFGFAGGRPDTFQSDESIYWGGEDTWLGNDVRYSNGNKGVSGEGVVDGDQHKMDHKDIHSRDLEQPVAAAHMGLIYVNPEGPDGVPDPIAAARDIRTTFHRMAMNDEETAALIIGGHSFGKTHGAAPSENTGPDPNSEDLSTQGFGWINKHGSGKGPDTITSGLEVTWTGTPTKWSNKYLEYLYKYEWELEKSPAGANQWVAKTEDHIIPDAYDANKKHKPRMLTTDMSMRMDPGFEKITRRWLDHPQELHDAFIRAWFKLLHRDMGPRSRWVGPEIPKEVLLWEDPVPEVDHALVEESDISALKKQILEAGIEPSKLIRTAWASAASYRGSDKRGGANGARIRLAPQKDWEVNNPKELAEVLKALEGVQSKFNGSASGGKKISLADLIVLAGTAAVEKAAGVSVPFTPGRTDATEEQTDAKSFEHLEPATDPFRNYGKSSDRARTEQLDLDKASLLRLTAPELTVLVGGMRALNANWDSSSHGIFTKRPGQLTNDFFVNLLDINTEWKAADSSKLPELYEGFDRKSGQKKWTGTRHDLVYGSHPELRAIAEVYAQPDNSDKFVKDFVKAWDKVMSNDRFDLKAKSS.

The segment at residues 92-240 is a cross-link (tryptophyl-tyrosyl-methioninium (Trp-Tyr) (with M-266)); that stretch reads WHSAGTYRVT…VAAAHMGLIY (149 aa). Histidine 93 acts as the Proton acceptor in catalysis. Positions 240 to 266 form a cross-link, tryptophyl-tyrosyl-methioninium (Tyr-Met) (with W-92); the sequence is YVNPEGPDGVPDPIAAARDIRTTFHRM. Residue histidine 281 participates in heme b binding.

Belongs to the peroxidase family. Peroxidase/catalase subfamily. In terms of assembly, homodimer or homotetramer. Heme b is required as a cofactor. In terms of processing, formation of the three residue Trp-Tyr-Met cross-link is important for the catalase, but not the peroxidase activity of the enzyme.

It localises to the cytoplasm. It catalyses the reaction H2O2 + AH2 = A + 2 H2O. The enzyme catalyses 2 H2O2 = O2 + 2 H2O. Functionally, bifunctional enzyme with both catalase and broad-spectrum peroxidase activity. This chain is Catalase-peroxidase, found in Phaeosphaeria nodorum (strain SN15 / ATCC MYA-4574 / FGSC 10173) (Glume blotch fungus).